The following is a 1202-amino-acid chain: Inner capsid protein VP3 (1202 aa).

Disordered regions lie at residues 1-45 (MRPI…SGKI) and 73-99 (YTSK…PRVT). Residues 10-21 (NQERTTTKHQET) are compositionally biased toward basic and acidic residues. The span at 27 to 45 (NEQTTSDQRFTRSSNSGKI) shows a compositional bias: polar residues.

Belongs to the turreted BTV-fold inner capsid family. Homodecamer; each decamer is made up of two conformers of VP2, called VP2A and VP2B. 12 homodecamers assemble to form an icosahedral capsid.

It is found in the virion. Inner capsid protein that self-assembles to form an icosahedral capsid with a T=2 symmetry, which consists of 120 copies of VP2, with channels at each of its five-fold vertices. This capsid constitutes the innermost concentric layer of the viral mature particle. In Aedes pseudoscutellaris reovirus (isolate France) (ApRV), this protein is Inner capsid protein VP3 (S3).